The chain runs to 206 residues: MAAVRSKICGITRVEDALVAAEAGVDAIGLVFYPKSPRAVTLRQAKAIVAALPPFVTAVGLFVNATRGEVGGILDELPLDLLQFHGDETPADCEGHGRPYIKALRVRPGEDIAARCLEYCNASGILLDAYVPGVPGGTGESFDWSLVPRGLPKPVILAGGLSVRNVRVAIARVSPYAVDVSGGVEAEKGVKDAEKVRAFIREVRNA.

This sequence belongs to the TrpF family.

The enzyme catalyses N-(5-phospho-beta-D-ribosyl)anthranilate = 1-(2-carboxyphenylamino)-1-deoxy-D-ribulose 5-phosphate. The protein operates within amino-acid biosynthesis; L-tryptophan biosynthesis; L-tryptophan from chorismate: step 3/5. This is N-(5'-phosphoribosyl)anthranilate isomerase from Azotobacter vinelandii (strain DJ / ATCC BAA-1303).